The primary structure comprises 138 residues: Transcription antitermination protein NusB (138 aa).

The protein belongs to the NusB family.

Involved in transcription antitermination. Required for transcription of ribosomal RNA (rRNA) genes. Binds specifically to the boxA antiterminator sequence of the ribosomal RNA (rrn) operons. This chain is Transcription antitermination protein NusB, found in Helicobacter pylori (strain Shi470).